The primary structure comprises 944 residues: UvrABC system protein A (944 aa).

33 to 40 (GLSGSGKS) serves as a coordination point for ATP. Residues 252-279 (CPICGFSIGELEPRMFSFNSPFGACPTC) form a C4-type zinc finger. 2 consecutive ABC transporter domains span residues 309–587 (WEPT…KKSL) and 607–935 (ITDR…QYLK). An ATP-binding site is contributed by 639–646 (GVSGSGKS). The C4-type zinc-finger motif lies at 738-764 (CEACKGDGIIKIEMHFLPDVYVPCEVC).

The protein belongs to the ABC transporter superfamily. UvrA family. In terms of assembly, forms a heterotetramer with UvrB during the search for lesions.

It is found in the cytoplasm. Its function is as follows. The UvrABC repair system catalyzes the recognition and processing of DNA lesions. UvrA is an ATPase and a DNA-binding protein. A damage recognition complex composed of 2 UvrA and 2 UvrB subunits scans DNA for abnormalities. When the presence of a lesion has been verified by UvrB, the UvrA molecules dissociate. This Staphylococcus epidermidis (strain ATCC 35984 / DSM 28319 / BCRC 17069 / CCUG 31568 / BM 3577 / RP62A) protein is UvrABC system protein A.